Reading from the N-terminus, the 107-residue chain is Putative double-stranded DNA mimic protein CGSHiGG_01135 (107 aa).

Belongs to the putative dsDNA mimic protein family.

In terms of biological role, may act as a double-stranded DNA (dsDNA) mimic. Probably regulates the activity of a dsDNA-binding protein. The polypeptide is Putative double-stranded DNA mimic protein CGSHiGG_01135 (Haemophilus influenzae (strain PittGG)).